Consider the following 402-residue polypeptide: CCA-adding enzyme (402 aa).

ATP is bound by residues Gly32 and Arg35. Gly32 and Arg35 together coordinate CTP. Residues Asp45 and Asp47 each contribute to the Mg(2+) site. ATP is bound by residues Arg116, Asp159, Arg162, Arg165, and Arg168. 5 residues coordinate CTP: Arg116, Asp159, Arg162, Arg165, and Arg168.

It belongs to the tRNA nucleotidyltransferase/poly(A) polymerase family. Bacterial CCA-adding enzyme type 3 subfamily. In terms of assembly, homodimer. It depends on Mg(2+) as a cofactor.

It catalyses the reaction a tRNA precursor + 2 CTP + ATP = a tRNA with a 3' CCA end + 3 diphosphate. It carries out the reaction a tRNA with a 3' CCA end + 2 CTP + ATP = a tRNA with a 3' CCACCA end + 3 diphosphate. In terms of biological role, catalyzes the addition and repair of the essential 3'-terminal CCA sequence in tRNAs without using a nucleic acid template. Adds these three nucleotides in the order of C, C, and A to the tRNA nucleotide-73, using CTP and ATP as substrates and producing inorganic pyrophosphate. tRNA 3'-terminal CCA addition is required both for tRNA processing and repair. Also involved in tRNA surveillance by mediating tandem CCA addition to generate a CCACCA at the 3' terminus of unstable tRNAs. While stable tRNAs receive only 3'-terminal CCA, unstable tRNAs are marked with CCACCA and rapidly degraded. This Streptococcus pyogenes serotype M1 protein is CCA-adding enzyme.